Consider the following 801-residue polypeptide: PR domain zinc finger protein 4 (801 aa).

The region spanning 412–529 (KQLVLRQSIV…PENELLFYYS (118 aa)) is the SET domain. Residues 545 to 566 (HLCNCGKECNSYTEFKAHLTSH) form a C2H2-type 1; atypical zinc finger. 4 consecutive C2H2-type zinc fingers follow at residues 618–640 (HKCD…LKIH), 646–668 (YRCT…MVIH), 674–696 (LKCD…VLIH), and 702–724 (IKCP…LNSH). The C2H2-type 6; atypical zinc-finger motif lies at 730 to 752 (YVCEKCTKAYLTKYHLTRHLKTC). The interval 751–782 (TCKGPTSSSSAPEEEEEDDSEEEDLADSVGTE) is disordered. Over residues 762-776 (PEEEEEDDSEEEDLA) the composition is skewed to acidic residues.

It belongs to the class V-like SAM-binding methyltransferase superfamily.

The protein localises to the nucleus. Its function is as follows. May function as a transcription factor involved in cell differentiation. The sequence is that of PR domain zinc finger protein 4 (PRDM4) from Pongo abelii (Sumatran orangutan).